A 387-amino-acid polypeptide reads, in one-letter code: Xylose isomerase (387 aa).

Catalysis depends on residues histidine 53 and aspartate 56. Mg(2+) contacts are provided by glutamate 180, glutamate 216, histidine 219, aspartate 244, aspartate 254, aspartate 256, and aspartate 286.

The protein belongs to the xylose isomerase family. In terms of assembly, homotetramer. The cofactor is Mg(2+).

It localises to the cytoplasm. The catalysed reaction is alpha-D-xylose = alpha-D-xylulofuranose. This Thermus thermophilus (strain ATCC 27634 / DSM 579 / HB8) protein is Xylose isomerase (xylA).